We begin with the raw amino-acid sequence, 334 residues long: Leucine-rich repeat-containing protein 26 (334 aa).

A signal peptide spans 1 to 26 (MRGPSWSRPRPLLLLLLLLSPWPVWA). Residues 27 to 261 (QVSATASPSG…HCAQPLALRD (235 aa)) lie on the Extracellular side of the membrane. The region spanning 34-71 (PSGSLGAPDCPEVCTCVPGGLASCSALSLPAVPPGLSL) is the LRRNT domain. 2 disulfide bridges follow: C43/C49 and C47/C57. LRR repeat units lie at residues 72 to 93 (RLRA…AFAG), 96 to 117 (ALQR…AFWG), 120 to 141 (ALQL…TFAP), 144 to 167 (ALRN…GALP), and 168 to 190 (LLRS…LGRL). N147 carries N-linked (GlcNAc...) asparagine glycosylation. One can recognise an LRRCT domain in the interval 201 to 255 (NPWGCGCALRPLCAWLRRHPLPASEAETVLCVWPGRLTLSPLTAFSDAAFSHCAQ). Intrachain disulfides connect C205–C231 and C207–C253. A helical transmembrane segment spans residues 262–282 (LAVVYTLGPASFLVSLASCLA). Topologically, residues 283 to 334 (LGSGLTACRARRRRLRTAALRPPRPPDPNPDPDPHGCASPADPGSPAAAAQA) are cytoplasmic. Positions 298 to 334 (RTAALRPPRPPDPNPDPDPHGCASPADPGSPAAAAQA) are disordered. Pro residues predominate over residues 304-313 (PPRPPDPNPD). A compositionally biased stretch (low complexity) spans 320 to 334 (ASPADPGSPAAAAQA).

In terms of assembly, interacts with KCNMA1. As to expression, isoform 1 is expressed highly in normal prostate and salivary gland, very weakly in colon, pancreas, and intestine, and not at all in other tissues. Isoform 1 is expressed highly in many cancer cell lines and in breast cancer, pancreatic cancer and colon cancer. Isoform 2 is expressed in cancer cell lines.

Its subcellular location is the cell membrane. The protein localises to the cytoplasm. The protein resides in the cytoskeleton. Functionally, auxiliary protein of the large-conductance, voltage and calcium-activated potassium channel (BK alpha). Required for the conversion of BK alpha channels from a high-voltage to a low-voltage activated channel type in non-excitable cells. These are characterized by negative membrane voltages and constant low levels of calcium. The protein is Leucine-rich repeat-containing protein 26 (LRRC26) of Homo sapiens (Human).